The sequence spans 597 residues: Putative diflavin flavoprotein A 3 (597 aa).

The zinc metallo-hydrolase stretch occupies residues 59–254 (QRGTTANSYL…YPAQTYAPSH (196 aa)). A Flavodoxin-like domain is found at 283 to 421 (VALIYASAYG…MCEEAGTDFA (139 aa)). Residues 449-597 (LGRLVGSLCV…VHHRKSGDHY (149 aa)) are flavodoxin-reductase-like.

The protein in the N-terminal section; belongs to the zinc metallo-hydrolase group 3 family. It in the C-terminal section; belongs to the flavodoxin reductase family. Requires Fe cation as cofactor.

Its function is as follows. Mediates electron transfer from NADH to oxygen, reducing it to water. This modular protein has 3 redox cofactors, in other organisms the same activity requires 2 or 3 proteins. This chain is Putative diflavin flavoprotein A 3 (dfa3), found in Synechocystis sp. (strain ATCC 27184 / PCC 6803 / Kazusa).